Here is a 79-residue protein sequence, read N- to C-terminus: Immunity protein CdiI (79 aa).

A run of 2 helical transmembrane segments spans residues 12-32 (IIFFPMLCTVLGLLGIPIGLI) and 51-71 (VVLFTLKIGIPIGFILGLGLW).

In terms of assembly, probably interacts with cognate toxin CdiA.

The protein resides in the cell inner membrane. In terms of biological role, immunity protein component of a toxin-immunity protein module, which functions as a cellular contact-dependent growth inhibition (CDI) system. CDI modules allow bacteria to communicate with and inhibit the growth of closely related neighboring bacteria in a contact-dependent fashion. Protects cells against CdiA from the same strain, its cognate toxin protein. Growth inhibition is reversible upon induction of this protein, occurring about 2.5 hours after induction, and requires an energy source. Does not protect against non-cognate CdiA from E.coli strain 563 / UPEC, D.dadantii strain 3937 or Y.pestis strain CO92. The protein is Immunity protein CdiI of Escherichia coli.